The following is a 394-amino-acid chain: Elongation factor Tu (394 aa).

Positions 10–204 (KPHVNIGTIG…AVDSYIPQPV (195 aa)) constitute a tr-type G domain. Positions 19–26 (GHVDHGKT) are G1. Residue 19 to 26 (GHVDHGKT) coordinates GTP. Position 26 (threonine 26) interacts with Mg(2+). Residues 60–64 (GITIS) form a G2 region. A G3 region spans residues 81–84 (DCPG). GTP contacts are provided by residues 81–85 (DCPGH) and 136–139 (NKVD). The tract at residues 136–139 (NKVD) is G4. The G5 stretch occupies residues 174–176 (SAL).

The protein belongs to the TRAFAC class translation factor GTPase superfamily. Classic translation factor GTPase family. EF-Tu/EF-1A subfamily. As to quaternary structure, monomer.

Its subcellular location is the cytoplasm. It catalyses the reaction GTP + H2O = GDP + phosphate + H(+). GTP hydrolase that promotes the GTP-dependent binding of aminoacyl-tRNA to the A-site of ribosomes during protein biosynthesis. The polypeptide is Elongation factor Tu (Rickettsia helvetica).